A 695-amino-acid polypeptide reads, in one-letter code: Phosphate acetyltransferase (695 aa).

The tract at residues 374–695 (FRYQLIQRAQ…LTAIQASVAR (322 aa)) is phosphate acetyltransferase.

The protein in the N-terminal section; belongs to the CobB/CobQ family. It in the C-terminal section; belongs to the phosphate acetyltransferase and butyryltransferase family. In terms of assembly, homohexamer.

Its subcellular location is the cytoplasm. The catalysed reaction is acetyl-CoA + phosphate = acetyl phosphate + CoA. The protein operates within metabolic intermediate biosynthesis; acetyl-CoA biosynthesis; acetyl-CoA from acetate: step 2/2. Involved in acetate metabolism. This is Phosphate acetyltransferase (pta) from Pseudomonas putida (strain ATCC 47054 / DSM 6125 / CFBP 8728 / NCIMB 11950 / KT2440).